We begin with the raw amino-acid sequence, 86 residues long: Large ribosomal subunit protein bL28 (86 aa).

It belongs to the bacterial ribosomal protein bL28 family.

In Bacteroides fragilis (strain ATCC 25285 / DSM 2151 / CCUG 4856 / JCM 11019 / LMG 10263 / NCTC 9343 / Onslow / VPI 2553 / EN-2), this protein is Large ribosomal subunit protein bL28.